We begin with the raw amino-acid sequence, 216 residues long: uncharacterized protein (216 aa).

One can recognise a Cupin type-2 domain in the interval 125 to 176 (YPKSTNFDSHYHDCDEYWVIIEGAGTVVVGSRSFEVEVGDCVAIGMGHHHDL).

This is an uncharacterized protein from Sinorhizobium fredii (strain NBRC 101917 / NGR234).